Consider the following 510-residue polypeptide: Nucleosome assembly protein 1-like 3 (510 aa).

Disordered stretches follow at residues 1–99 (MAEA…LGTN) and 161–311 (PTEE…KRED). Residues 35–74 (SSSSSSSTSGSSSSSSTSGSSSSSGSGSSSSSSGSGSTSS) are compositionally biased toward low complexity. A compositionally biased stretch (acidic residues) spans 161-182 (PTEEECEWNSEDEEFSSDEEVQ). 3 stretches are compositionally biased toward basic and acidic residues: residues 200–229 (PKEN…EVPK), 235–246 (KAEEKADSKDCM), and 254–300 (EDPK…VDLK).

It belongs to the nucleosome assembly protein (NAP) family.

The protein localises to the nucleus. In Pongo abelii (Sumatran orangutan), this protein is Nucleosome assembly protein 1-like 3 (NAP1L3).